A 473-amino-acid polypeptide reads, in one-letter code: 3-isopropylmalate dehydratase large subunit (473 aa).

[4Fe-4S] cluster is bound by residues C355, C415, and C418. Residues 423–452 (PDQLAPGERSASTSNRNFEGRQGKGGRTHL) form a disordered region.

The protein belongs to the aconitase/IPM isomerase family. LeuC type 1 subfamily. In terms of assembly, heterodimer of LeuC and LeuD. [4Fe-4S] cluster is required as a cofactor.

The enzyme catalyses (2R,3S)-3-isopropylmalate = (2S)-2-isopropylmalate. It functions in the pathway amino-acid biosynthesis; L-leucine biosynthesis; L-leucine from 3-methyl-2-oxobutanoate: step 2/4. In terms of biological role, catalyzes the isomerization between 2-isopropylmalate and 3-isopropylmalate, via the formation of 2-isopropylmaleate. In Corynebacterium jeikeium (strain K411), this protein is 3-isopropylmalate dehydratase large subunit.